We begin with the raw amino-acid sequence, 332 residues long: D-alanine--D-alanine ligase (332 aa).

An ATP-grasp domain is found at 112 to 312 (KRIWRADGLP…YPDLCLRILA (201 aa)). 138–193 (FQELGAPMIVKPSREGSTIGLTKVTSLGQCEQAYRLAAQHDPEVLCEQFIDGDETT) provides a ligand contact to ATP. Positions 265, 279, and 281 each coordinate Mg(2+).

It belongs to the D-alanine--D-alanine ligase family. Requires Mg(2+) as cofactor. Mn(2+) serves as cofactor.

The protein localises to the cytoplasm. It catalyses the reaction 2 D-alanine + ATP = D-alanyl-D-alanine + ADP + phosphate + H(+). It functions in the pathway cell wall biogenesis; peptidoglycan biosynthesis. Cell wall formation. This is D-alanine--D-alanine ligase from Acidovorax ebreus (strain TPSY) (Diaphorobacter sp. (strain TPSY)).